Here is a 198-residue protein sequence, read N- to C-terminus: MSTAVQVDDVMRYRDSRFQTIAAKLLPTQYLVVDDDTALTTTLGSCVAACLRDPVLKIGGMNHFLLPEGQVGDGAPARYGSYAMELLINDMLKRGAHRKRIEAKVFGGANVLKGFTSNPVGTRNAEFVRQYLQAEHIPIIAEDLCGIHPRKVWFFPTTGRVVVQRLPHAHEAEVAAAESAVRARLSKAPVTGGVELFE.

The protein belongs to the CheD family.

The catalysed reaction is L-glutaminyl-[protein] + H2O = L-glutamyl-[protein] + NH4(+). Functionally, probably deamidates glutamine residues to glutamate on methyl-accepting chemotaxis receptors (MCPs), playing an important role in chemotaxis. The protein is Probable chemoreceptor glutamine deamidase CheD of Xanthomonas campestris pv. campestris (strain 8004).